The sequence spans 465 residues: Cysteine--tRNA ligase (465 aa).

Cys27 contacts Zn(2+). The short motif at 29 to 39 (PTVYNYIHIGN) is the 'HIGH' region element. 3 residues coordinate Zn(2+): Cys207, His232, and Glu236. The short motif at 264 to 268 (KMSKS) is the 'KMSKS' region element. Lys267 lines the ATP pocket.

The protein belongs to the class-I aminoacyl-tRNA synthetase family. In terms of assembly, monomer. Requires Zn(2+) as cofactor.

The protein resides in the cytoplasm. The catalysed reaction is tRNA(Cys) + L-cysteine + ATP = L-cysteinyl-tRNA(Cys) + AMP + diphosphate. The protein is Cysteine--tRNA ligase of Clostridioides difficile (strain 630) (Peptoclostridium difficile).